A 129-amino-acid polypeptide reads, in one-letter code: Integration host factor subunit alpha (129 aa).

Residues 87-129 form a disordered region; sequence SALNGEAPPEDHAEIDAREEAAADAAEARGEDFDEEGMEDMEG. The span at 95–117 shows a compositional bias: basic and acidic residues; sequence PEDHAEIDAREEAAADAAEARGE. Acidic residues predominate over residues 118 to 129; it reads DFDEEGMEDMEG.

This sequence belongs to the bacterial histone-like protein family. In terms of assembly, heterodimer of an alpha and a beta chain.

In terms of biological role, this protein is one of the two subunits of integration host factor, a specific DNA-binding protein that functions in genetic recombination as well as in transcriptional and translational control. It is necessary for normal cell growth and the production of carotenoids in response to light. In Myxococcus xanthus, this protein is Integration host factor subunit alpha (ihfA).